The chain runs to 575 residues: Cyclic nucleotide-gated channel alpha-4 (575 aa).

Topologically, residues Met-1 to Leu-38 are cytoplasmic. Residues Asn-39–Asp-60 form a helical membrane-spanning segment. Residues Leu-61–Phe-70 lie on the Extracellular side of the membrane. Residues Val-71–Gly-91 form a helical membrane-spanning segment. Residues Phe-92 to Leu-116 are Cytoplasmic-facing. Residues Leu-117 to His-135 traverse the membrane as a helical segment. At Ile-136–Arg-140 the chain is on the extracellular side. Residues Leu-141–Thr-159 traverse the membrane as a helical segment. Residues Arg-160 to Ala-166 lie on the Cytoplasmic side of the membrane. Residues Pro-164–Met-272 form an ion conduction pathway region. The chain crosses the membrane as a helical span at residues Phe-167–Leu-190. Residues Ser-191 to Arg-213 lie on the Extracellular side of the membrane. The next 2 helical transmembrane spans lie at Leu-214–Val-248 and Gly-249–Asn-273. Residues Thr-231–Asp-234 are selectivity filter. The tract at residues Thr-274–Gln-350 is C-linker. The Cytoplasmic segment spans residues Thr-274–Glu-575. The IQ-type signature appears at Leu-292 to Arg-302. An a nucleoside 3',5'-cyclic phosphate-binding site is contributed by Ile-348–Ile-471. Positions Ala-354–Lys-474 are cyclic nucleotide-binding domain. 3',5'-cyclic GMP contacts are provided by Gly-414, Ser-417, Arg-430, and Thr-431. Arg-430 and Thr-431 together coordinate 3',5'-cyclic AMP. The stretch at Thr-493–Glu-547 forms a coiled coil. The segment at Thr-536 to Glu-575 is disordered. Acidic residues predominate over residues Asp-544–Pro-554. Residues Thr-558 to Gly-567 show a composition bias toward basic and acidic residues.

The protein belongs to the cyclic nucleotide-gated cation channel (TC 1.A.1.5) family. CNGA4 subfamily. The olfactory cyclic nucleotide-gated channel is an heterotetramer composed of CNGA2, CNGA4 and CNGB1b subunits with 2:1:1 stoichiometry. In terms of tissue distribution, expressed in the olfactory epithelium.

The protein localises to the cell projection. Its subcellular location is the cilium membrane. The catalysed reaction is Ca(2+)(in) = Ca(2+)(out). The enzyme catalyses Na(+)(in) = Na(+)(out). It carries out the reaction K(+)(in) = K(+)(out). It catalyses the reaction NH4(+)(in) = NH4(+)(out). The catalysed reaction is Rb(+)(in) = Rb(+)(out). The enzyme catalyses Li(+)(in) = Li(+)(out). It carries out the reaction Cs(+)(in) = Cs(+)(out). Ca(2+)-calmodulin exerts its inhibitory effect in cAMP sensitivity by binding to IQ-like motif of CNGA4 and preferably binds to the channel in the closed state. Inhibition by PIP3 of the CNG channel probably occurs via CGNA2 binding. Functionally, pore-forming subunit of the olfactory cyclic nucleotide-gated channel. Operates in the cilia of olfactory sensory neurons where chemical stimulation of the odorant is converted to an electrical signal. Mediates odorant-induced cAMP-dependent Ca(2+) influx triggering neuron depolarization. The rise of intracellular Ca(2+) levels potentiates the olfactory response by activating Ca(2+)-dependent Cl(-) channels, but it also serves as a negative feedback signal to desensitize the channel for rapid adaptation to odorants. Conducts cGMP- and cAMP-gated ion currents, with permeability for monovalent and divalent cations. Conducts cAMP- and cGMP-gated ion currents, with permeability for monovalent and divalent cations. May conduct nitric oxide-gated Ca(2+) currents relevant to neurons of vomeronasal organ, a system involved in the perception of pheromones. This chain is Cyclic nucleotide-gated channel alpha-4, found in Mus musculus (Mouse).